Here is a 132-residue protein sequence, read N- to C-terminus: U10-hexatoxin-Hi1a (132 aa).

An N-terminal signal peptide occupies residues 1–20 (MKGFIVFSLSLCLVFTVCLA). Residues 21–30 (EDELMKEAVR) constitute a propeptide that is removed on maturation.

Contains 5 disulfide bonds. As to expression, expressed by the venom gland.

The protein localises to the secreted. In terms of biological role, probable ion channel inhibitor. The polypeptide is U10-hexatoxin-Hi1a (Hadronyche infensa (Fraser island funnel-web spider)).